An 878-amino-acid chain; its full sequence is MNEQYSAMRSNVSMLGKLLGDTIKEALGEHILDRVETIRKLSKSSRAGNEAHRQELLSTLQNLSNDELLPVARAFSQFLNLTNVAEQYHSISPNGEAASNPEALAQLFTRLKDKKLSTKELQNAVSQLSIELVLTAHPTEITRRTLIHKLVEVNTCLSQLDHNDLADYERNKIMRRLRQLVAQSWHTDEIRKHRPSPIDEAKWGFAVVENSLWEGVPAFLREFNEQLENSIDYSLPAEAVPVRFTSWMGGDRDGNPNVTAEITRHVLLLSRWKACDLFTRDIQVLVSELSMTECTPELRARAGGDEVQEPYREIMKQLRSQLMSSQAYLEGRLKGERVLKPHDLLVNNEQLWEPLFACYQSLQACGMSIIANGQLLDTLRRVRCFGVPLVRIDVRQESTRHTEAIAELTRYLGLGDYESWSEADKQAFLIRELNSKRPLVPLKWEPSADTQEVLETCRVIAEAPQGSIAAYVISMARTPSDVLAVHLLLKEAGCPFALPVAPLFETLDDLNNADDVMTQLLNIDWYRGFIQGKQMVMIGYSDSAKDAGVMAASWAQYRAQDALIKTCEKAGVALTLFHGRGGSIGRGGAPAHAALLSQPPGSLKGGLRVTEQGEMIRFKFGLPEVTISSLALYTGAILEANLLPPPEPKKEWRALMDDLSDTSCKMYRGYVRENPEFVPYFRAATPELELGKLPLGSRPAKRKPNGGVESLRAIPWIFAWTQNRLMLPAWLGAGAGLQEAVKAGKQDQLEAMCRDWPFFSTRIAMLEMVFAKADLWLAEYYDQRLVDKSLWPLGQQLRDQLASDIKVVLTIANDAHLMEDLPWIAESIALRNVYTDPLNVLQAELLHRSRQQEQPDARVEQALMVTIAGVAAGMRNTG.

Residues His-137 and Lys-545 contribute to the active site.

The protein belongs to the PEPCase type 1 family. It depends on Mg(2+) as a cofactor.

It catalyses the reaction oxaloacetate + phosphate = phosphoenolpyruvate + hydrogencarbonate. Its function is as follows. Forms oxaloacetate, a four-carbon dicarboxylic acid source for the tricarboxylic acid cycle. The polypeptide is Phosphoenolpyruvate carboxylase (Serratia proteamaculans (strain 568)).